Reading from the N-terminus, the 366-residue chain is Molybdenum import ATP-binding protein ModC (366 aa).

Positions 1–231 constitute an ABC transporter domain; it reads MSEVILQLQK…KAMRPWQSFS (231 aa). 33 to 40 contributes to the ATP binding site; the sequence is GRSGAGKT. Residues 292–361 enclose the Mop domain; it reads ASSIRNILPA…IKGVSVAQRD (70 aa).

This sequence belongs to the ABC transporter superfamily. Molybdate importer (TC 3.A.1.8) family. The complex is composed of two ATP-binding proteins (ModC), two transmembrane proteins (ModB) and a solute-binding protein (ModA).

It is found in the cell inner membrane. The catalysed reaction is molybdate(out) + ATP + H2O = molybdate(in) + ADP + phosphate + H(+). Functionally, part of the ABC transporter complex ModABC involved in molybdenum import. Responsible for energy coupling to the transport system. The protein is Molybdenum import ATP-binding protein ModC of Vibrio cholerae serotype O1 (strain ATCC 39315 / El Tor Inaba N16961).